The primary structure comprises 512 residues: Hyaluronidase PH-20 (512 aa).

Positions 1 to 35 are cleaved as a signal peptide; that stretch reads MGELRFKHLFWGSFVESGGTFQTVLIFLLIPCSLT. Asparagine 46 carries an N-linked (GlcNAc...) asparagine glycan. Intrachain disulfides connect cysteine 60–cysteine 351 and cysteine 223–cysteine 237. The Proton donor role is filled by glutamate 147. N-linked (GlcNAc...) asparagine glycosylation is present at asparagine 165. Residues asparagine 293 and asparagine 368 are each glycosylated (N-linked (GlcNAc...) asparagine). 3 disulfide bridges follow: cysteine 376–cysteine 387, cysteine 381–cysteine 435, and cysteine 437–cysteine 464.

The protein belongs to the glycosyl hydrolase 56 family.

The protein localises to the cell membrane. It catalyses the reaction Random hydrolysis of (1-&gt;4)-linkages between N-acetyl-beta-D-glucosamine and D-glucuronate residues in hyaluronate.. Functionally, involved in sperm-egg adhesion. Upon fertilization sperm must first penetrate a layer of cumulus cells that surrounds the egg before reaching the zona pellucida. The cumulus cells are embedded in a matrix containing hyaluronic acid which is formed prior to ovulation. This protein aids in penetrating the layer of cumulus cells by digesting hyaluronic acid. This Mus musculus (Mouse) protein is Hyaluronidase PH-20 (Spam1).